A 576-amino-acid chain; its full sequence is Sodium/proton antiporter 1 (576 aa).

The transit peptide at 1–60 (MAVFPIGSHFAPPHQLTKRHVIATSSPISISTRLPQNVSFSKVSGVTGSTRLSKHGVLVR) directs the protein to the chloroplast. Helical transmembrane passes span 237 to 257 (TLLW…DNLT), 279 to 299 (LGGV…IGDV), 320 to 340 (FLPS…TSEV), 357 to 377 (APRG…VPVF), 379 to 399 (ALTG…LWIL), 426 to 446 (GALF…AGIL), 462 to 482 (LIAS…LVAA), 501 to 521 (LIAF…AAGV), and 541 to 561 (FAFA…NLHF).

The protein belongs to the NhaD Na(+)/H(+) (TC 2.A.62) antiporter family. In terms of tissue distribution, mostly expressed in mature and senescent leaves, and, to a lower extent, in seeds, roots, shoots, flowers and developing siliques.

It is found in the plastid. The protein localises to the chloroplast membrane. Its subcellular location is the chloroplast envelope. Its function is as follows. Na(+)/H(+) antiporter that extrudes sodium in exchange for external protons. The protein is Sodium/proton antiporter 1 of Arabidopsis thaliana (Mouse-ear cress).